A 377-amino-acid chain; its full sequence is Chaperone protein DnaJ (377 aa).

In terms of domain architecture, J spans Asp5 to Gly70. The CR-type zinc finger occupies Gly132–Thr210. Zn(2+)-binding residues include Cys145, Cys148, Cys162, Cys165, Cys184, Cys187, Cys198, and Cys201. 4 CXXCXGXG motif repeats span residues Cys145–Gly152, Cys162–Gly169, Cys184–Gly191, and Cys198–Gly205.

The protein belongs to the DnaJ family. Homodimer. The cofactor is Zn(2+).

The protein localises to the cytoplasm. Participates actively in the response to hyperosmotic and heat shock by preventing the aggregation of stress-denatured proteins and by disaggregating proteins, also in an autonomous, DnaK-independent fashion. Unfolded proteins bind initially to DnaJ; upon interaction with the DnaJ-bound protein, DnaK hydrolyzes its bound ATP, resulting in the formation of a stable complex. GrpE releases ADP from DnaK; ATP binding to DnaK triggers the release of the substrate protein, thus completing the reaction cycle. Several rounds of ATP-dependent interactions between DnaJ, DnaK and GrpE are required for fully efficient folding. Also involved, together with DnaK and GrpE, in the DNA replication of plasmids through activation of initiation proteins. The sequence is that of Chaperone protein DnaJ from Klebsiella pneumoniae subsp. pneumoniae (strain ATCC 700721 / MGH 78578).